A 321-amino-acid polypeptide reads, in one-letter code: uncharacterized protein (321 aa).

This is an uncharacterized protein from Galliformes (FAdV-1).